The following is a 120-amino-acid chain: NAD(P)H-quinone oxidoreductase subunit 3 (120 aa).

The next 3 membrane-spanning stretches (helical) occupy residues 2–22, 64–84, and 89–109; these read FVLS…LVPI, MFAL…PWAV, and LGLL…IALV.

This sequence belongs to the complex I subunit 3 family. NDH-1 can be composed of about 15 different subunits; different subcomplexes with different compositions have been identified which probably have different functions.

The protein localises to the cellular thylakoid membrane. The enzyme catalyses a plastoquinone + NADH + (n+1) H(+)(in) = a plastoquinol + NAD(+) + n H(+)(out). The catalysed reaction is a plastoquinone + NADPH + (n+1) H(+)(in) = a plastoquinol + NADP(+) + n H(+)(out). NDH-1 shuttles electrons from an unknown electron donor, via FMN and iron-sulfur (Fe-S) centers, to quinones in the respiratory and/or the photosynthetic chain. The immediate electron acceptor for the enzyme in this species is believed to be plastoquinone. Couples the redox reaction to proton translocation, and thus conserves the redox energy in a proton gradient. Cyanobacterial NDH-1 also plays a role in inorganic carbon-concentration. This chain is NAD(P)H-quinone oxidoreductase subunit 3, found in Picosynechococcus sp. (strain ATCC 27264 / PCC 7002 / PR-6) (Agmenellum quadruplicatum).